A 370-amino-acid polypeptide reads, in one-letter code: Aminomethyltransferase (370 aa).

It belongs to the GcvT family. The glycine cleavage system is composed of four proteins: P, T, L and H.

It carries out the reaction N(6)-[(R)-S(8)-aminomethyldihydrolipoyl]-L-lysyl-[protein] + (6S)-5,6,7,8-tetrahydrofolate = N(6)-[(R)-dihydrolipoyl]-L-lysyl-[protein] + (6R)-5,10-methylene-5,6,7,8-tetrahydrofolate + NH4(+). In terms of biological role, the glycine cleavage system catalyzes the degradation of glycine. The polypeptide is Aminomethyltransferase (Leptospira biflexa serovar Patoc (strain Patoc 1 / Ames)).